The chain runs to 246 residues: Ribonuclease 3 (246 aa).

One can recognise an RNase III domain in the interval 10 to 135 (LENFLTLNNI…FVAAIYLDLG (126 aa)). Glu50 serves as a coordination point for Mg(2+). Asp54 is an active-site residue. Residues Asp121 and Glu124 each coordinate Mg(2+). Residue Glu124 is part of the active site. The DRBM domain maps to 161 to 230 (DPKSSFQEYI…ATRALETLKA (70 aa)).

This sequence belongs to the ribonuclease III family. In terms of assembly, homodimer. It depends on Mg(2+) as a cofactor.

Its subcellular location is the cytoplasm. The catalysed reaction is Endonucleolytic cleavage to 5'-phosphomonoester.. Functionally, digests double-stranded RNA. Involved in the processing of primary rRNA transcript to yield the immediate precursors to the large and small rRNAs (23S and 16S). Processes some mRNAs, and tRNAs when they are encoded in the rRNA operon. Processes pre-crRNA and tracrRNA of type II CRISPR loci if present in the organism. This is Ribonuclease 3 from Mycoplasma mobile (strain ATCC 43663 / 163K / NCTC 11711) (Mesomycoplasma mobile).